The sequence spans 158 residues: Low molecular weight phosphotyrosine protein phosphatase (158 aa).

Position 2 is an N-acetylalanine (Ala-2). Residue Cys-13 is the Nucleophile of the active site. The active site involves Arg-19. Catalysis depends on Asp-130, which acts as the Proton donor. Phosphotyrosine occurs at positions 132 and 133.

The protein belongs to the low molecular weight phosphotyrosine protein phosphatase family. As to quaternary structure, interacts with EPHA2; dephosphorylates EPHA2. Interacts with EPHB1. In terms of assembly, interacts with the SH3 domain of SPTAN1. There is no interaction observed for isoform 2. Post-translationally, phosphorylated by LCK. Phosphorylation at Tyr-132 increases its phosphatase activity. Widely expressed with highest levels in brain and liver and lowest levels in muscle.

The protein resides in the cytoplasm. The enzyme catalyses O-phospho-L-tyrosyl-[protein] + H2O = L-tyrosyl-[protein] + phosphate. It carries out the reaction a phosphate monoester + H2O = an alcohol + phosphate. Inhibited by sulfhydryl reagents. In terms of biological role, acts on tyrosine phosphorylated proteins, low-MW aryl phosphates and natural and synthetic acyl phosphates with differences in substrate specificity between isoform 1 and isoform 2. The polypeptide is Low molecular weight phosphotyrosine protein phosphatase (Mus musculus (Mouse)).